The primary structure comprises 248 residues: Triosephosphate isomerase (248 aa).

9 to 11 lines the substrate pocket; the sequence is NWK. H94 (electrophile) is an active-site residue. E166 serves as the catalytic Proton acceptor. Residues G172, S212, and 233–234 contribute to the substrate site; that span reads GG.

Belongs to the triosephosphate isomerase family. In terms of assembly, homodimer.

The protein localises to the cytoplasm. The enzyme catalyses D-glyceraldehyde 3-phosphate = dihydroxyacetone phosphate. Its pathway is carbohydrate biosynthesis; gluconeogenesis. The protein operates within carbohydrate degradation; glycolysis; D-glyceraldehyde 3-phosphate from glycerone phosphate: step 1/1. In terms of biological role, involved in the gluconeogenesis. Catalyzes stereospecifically the conversion of dihydroxyacetone phosphate (DHAP) to D-glyceraldehyde-3-phosphate (G3P). In Clostridium botulinum (strain Langeland / NCTC 10281 / Type F), this protein is Triosephosphate isomerase.